The following is a 273-amino-acid chain: Putative phosphoenolpyruvate synthase regulatory protein (273 aa).

G153 to T160 lines the ADP pocket.

The protein belongs to the pyruvate, phosphate/water dikinase regulatory protein family. PSRP subfamily.

The enzyme catalyses [pyruvate, water dikinase] + ADP = [pyruvate, water dikinase]-phosphate + AMP + H(+). The catalysed reaction is [pyruvate, water dikinase]-phosphate + phosphate + H(+) = [pyruvate, water dikinase] + diphosphate. Bifunctional serine/threonine kinase and phosphorylase involved in the regulation of the phosphoenolpyruvate synthase (PEPS) by catalyzing its phosphorylation/dephosphorylation. In Delftia acidovorans (strain DSM 14801 / SPH-1), this protein is Putative phosphoenolpyruvate synthase regulatory protein.